Consider the following 117-residue polypeptide: Large ribosomal subunit protein bL20 (117 aa).

Belongs to the bacterial ribosomal protein bL20 family.

Binds directly to 23S ribosomal RNA and is necessary for the in vitro assembly process of the 50S ribosomal subunit. It is not involved in the protein synthesizing functions of that subunit. This Leptospira biflexa serovar Patoc (strain Patoc 1 / Ames) protein is Large ribosomal subunit protein bL20.